A 406-amino-acid polypeptide reads, in one-letter code: 2,3-bisphosphoglycerate-independent phosphoglycerate mutase (406 aa).

Belongs to the BPG-independent phosphoglycerate mutase family. A-PGAM subfamily.

It carries out the reaction (2R)-2-phosphoglycerate = (2R)-3-phosphoglycerate. The protein operates within carbohydrate degradation; glycolysis; pyruvate from D-glyceraldehyde 3-phosphate: step 3/5. Functionally, catalyzes the interconversion of 2-phosphoglycerate and 3-phosphoglycerate. The chain is 2,3-bisphosphoglycerate-independent phosphoglycerate mutase from Methanococcus vannielii (strain ATCC 35089 / DSM 1224 / JCM 13029 / OCM 148 / SB).